The sequence spans 215 residues: MADKSDLNALSGRFRGYYPVVIDVETAGFNAQSDALLEIAAVTLQMNKEGWLLPDETLHFHVEPFEGANLQPEALAFNGIDPTNPLRGAVSEHDALHAIFKAVRKGIKDKGCNRAIIVAHNANFDHSFVMAAAERASLKRNPFHPFATFDTAALSGLVLGQTVLAKACLAAGIPFDSSQAHSALYDTLQTAKLFCELVNRWKKLGGWPLPTAESE.

The region spanning 20-194 (VVIDVETAGF…YDTLQTAKLF (175 aa)) is the Exonuclease domain. Positions 23, 25, 181, and 186 each coordinate Mg(2+). Residue H181 is the Proton donor/acceptor of the active site.

Belongs to the RNase T family. Homodimer. The cofactor is Mg(2+).

Trims short 3' overhangs of a variety of RNA species, leaving a one or two nucleotide 3' overhang. Responsible for the end-turnover of tRNA: specifically removes the terminal AMP residue from uncharged tRNA (tRNA-C-C-A). Also appears to be involved in tRNA biosynthesis. In Yersinia pseudotuberculosis serotype I (strain IP32953), this protein is Ribonuclease T.